Reading from the N-terminus, the 377-residue chain is Stimulator of interferon genes protein (377 aa).

Over 1 to 21 (MRRAEENNGFGTIPKRRNQHT) the chain is Cytoplasmic. The chain crosses the membrane as a helical span at residues 22 to 42 (PFYASIGMIVVIIVAFTSYHI). Residues 43–57 (TSYGDDRNRAMRQYS) are Extracellular-facing. Residues 58 to 80 (FTFSLAYLAFLVGELLRRCCLFA) traverse the membrane as a helical segment. Over 81–101 (EEYRHIETRYNGSLKKAIQTT) the chain is Cytoplasmic. Residues 102 to 122 (FSFGHNNVLFVASLLFFVVFV) traverse the membrane as a helical segment. The Extracellular portion of the chain corresponds to 123–154 (ASNDPNGSSSVIQGNSTAEPHTEMRQTSGWQG). Residues 155-175 (LWGQFIISALLTPLVVHLLGL) form a helical membrane-spanning segment. At 176 to 377 (RELSKVEESQ…LKDSELEIGG (202 aa)) the chain is on the cytoplasmic side. 2',3'-cGAMP contacts are provided by residues tyrosine 206, arginine 272, 278-279 (RH), and threonine 303. 3',3'-c-di-GMP is bound by residues tyrosine 206, arginine 272, arginine 278, and 300 to 303 (EYAT).

This sequence belongs to the TMEM173 family. As to quaternary structure, homodimer.

Its subcellular location is the endoplasmic reticulum membrane. Its function is as follows. Sensor of cytosolic DNA from bacteria and viruses that promotes autophagy. Acts by recognizing and binding cyclic GMP-AMP (cGAMP), a messenger produced by CGAS in response to DNA in the cytosol. Following cGAMP-binding, promotes the formation of autophagosomes, leading to target cytosolic DNA for degradation by the lysosome. Exhibits guanine base-specific ligand recognition. Binds 3'-3'linked cGAMP, 2'-3' linked cGAMP and 3'-3' linked c-di-GMP with much greater affinity as compared to 3'-3' linked c-di-AMP. Lacks the C-terminal tail (CTT) found in mammalian orthologs which is essential for interferon signaling. The protein is Stimulator of interferon genes protein of Nematostella vectensis (Starlet sea anemone).